The chain runs to 169 residues: Ribosome maturation factor RimM (169 aa).

The region spanning 96–166 is the PRC barrel domain; that stretch reads EDEFYFADLI…AVVVRPVEVE (71 aa).

Belongs to the RimM family. In terms of assembly, binds ribosomal protein uS19.

It localises to the cytoplasm. An accessory protein needed during the final step in the assembly of 30S ribosomal subunit, possibly for assembly of the head region. Essential for efficient processing of 16S rRNA. May be needed both before and after RbfA during the maturation of 16S rRNA. It has affinity for free ribosomal 30S subunits but not for 70S ribosomes. This Acidiphilium cryptum (strain JF-5) protein is Ribosome maturation factor RimM.